Reading from the N-terminus, the 169-residue chain is Large ribosomal subunit protein bL9 (169 aa).

The protein belongs to the bacterial ribosomal protein bL9 family.

Binds to the 23S rRNA. The protein is Large ribosomal subunit protein bL9 of Chlamydia pneumoniae (Chlamydophila pneumoniae).